Reading from the N-terminus, the 150-residue chain is Interferon antagonist OPG027 (150 aa).

It belongs to the orthopoxvirus OPG027 family.

Inhibits antiviral activity induced by type I interferons. Does not block signal transduction of IFN, but is important to counteract the host antiviral state induced by a pre-treatment with IFN. The polypeptide is Interferon antagonist OPG027 (OPG027) (Cynomys gunnisoni (Gunnison's prairie dog)).